The sequence spans 230 residues: Protein-L-isoaspartate O-methyltransferase 1 (230 aa).

Ser65 is an active-site residue.

It belongs to the methyltransferase superfamily. L-isoaspartyl/D-aspartyl protein methyltransferase family. Monomer. In terms of tissue distribution, expressed in roots, rosette leaves, stems, cauline leaves, flowers and developing seeds.

The protein resides in the cytoplasm. It catalyses the reaction [protein]-L-isoaspartate + S-adenosyl-L-methionine = [protein]-L-isoaspartate alpha-methyl ester + S-adenosyl-L-homocysteine. Its function is as follows. Catalyzes the methyl esterification of L-isoaspartyl residues in peptides and proteins that result from spontaneous decomposition of normal L-aspartyl and L-asparaginyl residues. It plays a role in the repair and/or degradation of damaged proteins. Contributes to seed longevity and germination vigor by limiting the abnormal accumulation of the L-isoaspartyl residues in seed proteins. This chain is Protein-L-isoaspartate O-methyltransferase 1 (PIMT1), found in Arabidopsis thaliana (Mouse-ear cress).